Consider the following 350-residue polypeptide: Holliday junction branch migration complex subunit RuvB (350 aa).

Residues 1–183 (MSAERLVNPH…FVAVHRLVFY (183 aa)) form a large ATPase domain (RuvB-L) region. Residues Leu-22, Arg-23, Gly-64, Lys-67, Thr-68, Ser-69, 130–132 (EDF), Arg-173, Tyr-183, and Arg-220 contribute to the ATP site. Mg(2+) is bound at residue Thr-68. A small ATPAse domain (RuvB-S) region spans residues 184 to 254 (SDAAMTEIVS…VAREALAQLE (71 aa)). A head domain (RuvB-H) region spans residues 257–350 (ELGLDENDRR…ESGPQQGTLF (94 aa)). Residues Arg-312 and Arg-317 each contribute to the DNA site.

It belongs to the RuvB family. Homohexamer. Forms an RuvA(8)-RuvB(12)-Holliday junction (HJ) complex. HJ DNA is sandwiched between 2 RuvA tetramers; dsDNA enters through RuvA and exits via RuvB. An RuvB hexamer assembles on each DNA strand where it exits the tetramer. Each RuvB hexamer is contacted by two RuvA subunits (via domain III) on 2 adjacent RuvB subunits; this complex drives branch migration. In the full resolvosome a probable DNA-RuvA(4)-RuvB(12)-RuvC(2) complex forms which resolves the HJ.

It localises to the cytoplasm. It carries out the reaction ATP + H2O = ADP + phosphate + H(+). Its function is as follows. The RuvA-RuvB-RuvC complex processes Holliday junction (HJ) DNA during genetic recombination and DNA repair, while the RuvA-RuvB complex plays an important role in the rescue of blocked DNA replication forks via replication fork reversal (RFR). RuvA specifically binds to HJ cruciform DNA, conferring on it an open structure. The RuvB hexamer acts as an ATP-dependent pump, pulling dsDNA into and through the RuvAB complex. RuvB forms 2 homohexamers on either side of HJ DNA bound by 1 or 2 RuvA tetramers; 4 subunits per hexamer contact DNA at a time. Coordinated motions by a converter formed by DNA-disengaged RuvB subunits stimulates ATP hydrolysis and nucleotide exchange. Immobilization of the converter enables RuvB to convert the ATP-contained energy into a lever motion, pulling 2 nucleotides of DNA out of the RuvA tetramer per ATP hydrolyzed, thus driving DNA branch migration. The RuvB motors rotate together with the DNA substrate, which together with the progressing nucleotide cycle form the mechanistic basis for DNA recombination by continuous HJ branch migration. Branch migration allows RuvC to scan DNA until it finds its consensus sequence, where it cleaves and resolves cruciform DNA. In Chloroflexus aggregans (strain MD-66 / DSM 9485), this protein is Holliday junction branch migration complex subunit RuvB.